Here is a 470-residue protein sequence, read N- to C-terminus: Protein naked cuticle homolog 1 (470 aa).

Disordered regions lie at residues 1-21 (MGKL…PEGD) and 90-114 (PPEK…PCPG). Glycine 2 is lipidated: N-myristoyl glycine. Over residues 92–109 (EKTDGLGSGDEKKMERVS) the composition is skewed to basic and acidic residues. Residues 125 to 190 (QCDVSMEEDS…LRVKLTVAPD (66 aa)) are interaction with DVL1, DVL2 and DVL3. One can recognise an EF-hand domain in the interval 131–166 (EEDSRQEWTFTLYDFDNNGKVTREDITSLLHTIYEV). Residues aspartate 144, aspartate 146, asparagine 148, lysine 150, and aspartate 155 each contribute to the Ca(2+) site. Over residues 192 to 205 (SQSKRSVLVNQADL) the composition is skewed to polar residues. Disordered regions lie at residues 192–228 (SQSK…KKQR), 271–314 (QFGP…QGVD), 337–357 (GTQD…KSVG), and 446–470 (GQPV…FYQT). A compositionally biased stretch (basic and acidic residues) spans 210-227 (PRAETKPTEDLRSWEKKQ). A compositionally biased stretch (polar residues) spans 271-281 (QFGPGSPSVAQ). Residues 452-470 (HEHHHHHEHHHHYHHFYQT) show a composition bias toward basic residues.

This sequence belongs to the NKD family. In terms of assembly, interacts with DVL1, DVL2, DVL3 and PPP2R3A. Expressed in colon, heart, kidney, leukocyte, liver, lung, ovary, pancreas, placenta, prostate, skeletal muscle, small intestine and spleen.

The protein localises to the cell membrane. The protein resides in the cytoplasm. Its function is as follows. Cell autonomous antagonist of the canonical Wnt signaling pathway. May activate a second Wnt signaling pathway that controls planar cell polarity. The polypeptide is Protein naked cuticle homolog 1 (NKD1) (Homo sapiens (Human)).